The primary structure comprises 580 residues: L-aspartate oxidase (580 aa).

Residues 26 to 29 (SGVA), lysine 49, 56 to 63 (STRWAQGG), and aspartate 227 each bind FAD. The Proton donor/acceptor role is filled by arginine 297. FAD-binding positions include glutamate 382 and 398 to 399 (SL). The segment at 556–580 (VHTTDTPEFPPTVHGAQPTHRPQEQ) is disordered.

The protein belongs to the FAD-dependent oxidoreductase 2 family. NadB subfamily. FAD serves as cofactor.

It localises to the cytoplasm. The catalysed reaction is L-aspartate + O2 = iminosuccinate + H2O2. Its pathway is cofactor biosynthesis; NAD(+) biosynthesis; iminoaspartate from L-aspartate (oxidase route): step 1/1. Functionally, catalyzes the oxidation of L-aspartate to iminoaspartate, the first step in the de novo biosynthesis of NAD(+). The sequence is that of L-aspartate oxidase (nadB) from Streptomyces coelicolor (strain ATCC BAA-471 / A3(2) / M145).